Here is a 259-residue protein sequence, read N- to C-terminus: Thiazole synthase (259 aa).

Lys-95 functions as the Schiff-base intermediate with DXP in the catalytic mechanism. 1-deoxy-D-xylulose 5-phosphate is bound by residues Gly-156, 182 to 183 (AG), and 204 to 205 (AS).

The protein belongs to the ThiG family. As to quaternary structure, homotetramer. Forms heterodimers with either ThiH or ThiS.

It is found in the cytoplasm. The catalysed reaction is [ThiS sulfur-carrier protein]-C-terminal-Gly-aminoethanethioate + 2-iminoacetate + 1-deoxy-D-xylulose 5-phosphate = [ThiS sulfur-carrier protein]-C-terminal Gly-Gly + 2-[(2R,5Z)-2-carboxy-4-methylthiazol-5(2H)-ylidene]ethyl phosphate + 2 H2O + H(+). Its pathway is cofactor biosynthesis; thiamine diphosphate biosynthesis. In terms of biological role, catalyzes the rearrangement of 1-deoxy-D-xylulose 5-phosphate (DXP) to produce the thiazole phosphate moiety of thiamine. Sulfur is provided by the thiocarboxylate moiety of the carrier protein ThiS. In vitro, sulfur can be provided by H(2)S. The polypeptide is Thiazole synthase (Corynebacterium efficiens (strain DSM 44549 / YS-314 / AJ 12310 / JCM 11189 / NBRC 100395)).